Consider the following 137-residue polypeptide: Golgin subfamily A member 7 (137 aa).

Residues C69 and C72 are each lipidated (S-palmitoyl cysteine).

Belongs to the ERF4 family. In terms of assembly, interacts with GOLGA3. Interacts with ZDHHC9. Palmitoylated on Cys-69 and Cys-72; which is required for Golgi localization and interaction with GOLGA3.

The protein localises to the golgi apparatus membrane. Its function is as follows. May be involved in protein transport from Golgi to cell surface. The ZDHHC9-GOLGA7 complex is a palmitoyltransferase specific for HRAS and NRAS. The sequence is that of Golgin subfamily A member 7 (GOLGA7) from Bos taurus (Bovine).